The sequence spans 301 residues: Probable alpha-L-glutamate ligase (301 aa).

One can recognise an ATP-grasp domain in the interval 104 to 287; it reads LQLLSRRGIG…VAGMIIEHLE (184 aa). Residues lysine 141, 178–179, aspartate 187, and 211–213 contribute to the ATP site; these read EY and RSN. The Mg(2+) site is built by aspartate 248, glutamate 260, and asparagine 262. Residues aspartate 248, glutamate 260, and asparagine 262 each contribute to the Mn(2+) site.

Belongs to the RimK family. The cofactor is Mg(2+). It depends on Mn(2+) as a cofactor.

This chain is Probable alpha-L-glutamate ligase, found in Pseudomonas putida (strain GB-1).